Reading from the N-terminus, the 212-residue chain is Protein-L-isoaspartate O-methyltransferase (212 aa).

The active site involves serine 60.

This sequence belongs to the methyltransferase superfamily. L-isoaspartyl/D-aspartyl protein methyltransferase family.

The protein resides in the cytoplasm. It catalyses the reaction [protein]-L-isoaspartate + S-adenosyl-L-methionine = [protein]-L-isoaspartate alpha-methyl ester + S-adenosyl-L-homocysteine. Catalyzes the methyl esterification of L-isoaspartyl residues in peptides and proteins that result from spontaneous decomposition of normal L-aspartyl and L-asparaginyl residues. It plays a role in the repair and/or degradation of damaged proteins. The sequence is that of Protein-L-isoaspartate O-methyltransferase from Pseudomonas putida (strain ATCC 700007 / DSM 6899 / JCM 31910 / BCRC 17059 / LMG 24140 / F1).